The sequence spans 413 residues: Gamma-glutamyl phosphate reductase (413 aa).

Belongs to the gamma-glutamyl phosphate reductase family.

Its subcellular location is the cytoplasm. It carries out the reaction L-glutamate 5-semialdehyde + phosphate + NADP(+) = L-glutamyl 5-phosphate + NADPH + H(+). It participates in amino-acid biosynthesis; L-proline biosynthesis; L-glutamate 5-semialdehyde from L-glutamate: step 2/2. Functionally, catalyzes the NADPH-dependent reduction of L-glutamate 5-phosphate into L-glutamate 5-semialdehyde and phosphate. The product spontaneously undergoes cyclization to form 1-pyrroline-5-carboxylate. The chain is Gamma-glutamyl phosphate reductase from Salinispora arenicola (strain CNS-205).